A 367-amino-acid chain; its full sequence is rRNA processing protein RCL1 (367 aa).

Serine 2 is modified (N-acetylserine).

It belongs to the RNA 3'-terminal cyclase family. Type 2 subfamily. As to quaternary structure, interacts directly with BMS1 and the U3 snoRNA to form a stable subcomplex. Component of the 90S small subunit processome also known as 90S pre-ribosome that consists of the 35S pre-rRNA, early-associating ribosomal proteins most of which are part of the small ribosomal subunit, the U3 snoRNA and associated proteins.

It is found in the nucleus. The protein resides in the nucleolus. Does not have cyclase activity. Plays a role in 40S-ribosomal-subunit biogenesis in the early pre-rRNA processing steps at sites A0, A1 and A2 that are required for proper maturation of the 18S RNA. RCL1 activates BMS1 by promoting GDP/GTP exchange. The sequence is that of rRNA processing protein RCL1 (RCL1) from Saccharomyces cerevisiae (strain ATCC 204508 / S288c) (Baker's yeast).